Reading from the N-terminus, the 494-residue chain is Aldehyde dehydrogenase (494 aa).

223–228 (GSTTAG) contacts NAD(+). Active-site residues include Glu-245 and Cys-279.

The protein belongs to the aldehyde dehydrogenase family.

The enzyme catalyses an aldehyde + NAD(+) + H2O = a carboxylate + NADH + 2 H(+). Its pathway is mycotoxin biosynthesis. Its function is as follows. Aldehyde dehydrogenase; part of the gene cluster that mediates the biosynthesis of the selective antifungal agent ascochitine, an o-quinone methide that plays a possible protective role against other microbial competitors in nature and is considered to be important for pathogenicity of legume-associated Didymella species. The pathway probably begins with the synthesis of a keto-aldehyde intermediate by the ascochitine non-reducing polyketide synthase pksAC from successive condensations of 4 malonyl-CoA units, presumably with a simple acetyl-CoA starter unit. Release of the keto-aldehyde intermediate is consistent with the presence of the C-terminal reductive release domain. The HR-PKS (orf7) probably makes a diketide starter unit which is passed to the non-reducing polyketide synthase pksAC for further extension, producing ascochital and ascochitine. The aldehyde dehydrogenase (orf1), the 2-oxoglutarate-dependent dioxygenase (orf3) and the dehydrogenase (orf9) are probably involved in subsequent oxidations of methyl groups to the carboxylic acid of the heterocyclic ring. The ascochitine gene cluster also includes a gene encoding a short peptide with a cupin domain (orf2) that is often found in secondary metabolite gene clusters and which function has still to be determined. This chain is Aldehyde dehydrogenase, found in Didymella fabae (Leaf and pod spot disease fungus).